We begin with the raw amino-acid sequence, 2276 residues long: Poly [ADP-ribose] polymerase tankyrase (2276 aa).

Composition is skewed to basic residues over residues 1-15 and 87-98; these read MARR…VKAA and KAVKAPKVKAPS. Disordered regions lie at residues 1-20 and 79-103; these read MARR…KIDG and SSKT…KGND. 15 ANK repeats span residues 345–374, 378–407, 411–440, 461–490, 498–527, 531–560, 564–593, 598–627, 675–725, 729–758, 970–999, 1171–1200, 1204–1233, 1472–1501, and 1505–1535; these read KNIT…TINI, DNWY…SVTM, QTET…DLEK, SGNS…IVVD, NRLT…LVEG, KKRT…SLTL, SGNT…NILS, WQLY…KDKA, SGQT…KVDV, EDNT…NKRN, KDDV…EMHL, NGNT…HVDL, DGNT…DVTE, GLIP…SLKT, and YGRT…AVVL. Residues 1570–1649 form a disordered region; the sequence is VPARVESDEE…STGPKRKKLV (80 aa). Composition is skewed to acidic residues over residues 1576–1590 and 1612–1622; these read SDEE…ESGE and SDDEDDDDDDS. An ANK 16 repeat occupies 1662–1706; it reads KENNPLHYFIEPLAWENVELLGDLAAANKTAIVQCLIDKRSPNPI. The WGR domain maps to 1788–1889; sequence GLVSFCDETQ…ANFRDMPKKY (102 aa). The PARP alpha-helical domain maps to 1910–2045; it reads KNTEKDPIRR…EIETATRLLC (136 aa). Positions 2047–2276 constitute a PARP catalytic domain; sequence AEFRQDLDRV…VLPKYIVMYK (230 aa).

As to expression, expressed throughout the head and tail, in germ cells and somatic cells.

It localises to the nucleus. Its subcellular location is the chromosome. It carries out the reaction NAD(+) + (ADP-D-ribosyl)n-acceptor = nicotinamide + (ADP-D-ribosyl)n+1-acceptor + H(+).. The enzyme catalyses L-aspartyl-[protein] + NAD(+) = 4-O-(ADP-D-ribosyl)-L-aspartyl-[protein] + nicotinamide. The catalysed reaction is L-glutamyl-[protein] + NAD(+) = 5-O-(ADP-D-ribosyl)-L-glutamyl-[protein] + nicotinamide. In terms of biological role, poly[ADP-ribose] polymerases modify various nuclear proteins by poly(ADP-ribosyl)ation, a post-translational modification synthesized after DNA damage that appears as an obligatory step in a detection/signaling pathway leading to the reparation of DNA strand breaks and programmed cell death. This chain is Poly [ADP-ribose] polymerase tankyrase, found in Caenorhabditis elegans.